The chain runs to 86 residues: Putative membrane protein insertion efficiency factor (86 aa).

This sequence belongs to the UPF0161 family.

It is found in the cell inner membrane. Its function is as follows. Could be involved in insertion of integral membrane proteins into the membrane. The polypeptide is Putative membrane protein insertion efficiency factor (Haemophilus influenzae (strain 86-028NP)).